The primary structure comprises 1097 residues: MSSSALQVAKTATYLPDLVEVQRASFKWFLEKGLIEELQNFSPISDYTGKLELHFIGEEYRLKRPRHDVEEAKRRDATFASQMYVTCRLINKETGEIKEQEVFIGELPLMTERGTFIINGAERVIVNQIVRSPGVYFKDELDKNGRRTYNANVIPNRGAWLKFETDKNNLLYVRVDKTRKINAHVLMRAMGLSDNDVVDKLRHPEFYQNSIDSANDEGINSEDQALLELYKKLRPGEPPSVSGGQQLLNSRFFDPKRYDLGRVGRYKINKKLRLTVPDDVRTLTHEDVLSTIDYLINLELDIGGASLDDIDHLGNRRVRSVGELLQNQVRVGLNRLERIIKERMTVGETDSLTPAQLVNPKPLVAAIKEFFGSSQLSQFMDQTNPLAELTHKRRISALGPGGLTRERAGFAVRDIHPSHYGRLCPIETPEGPNAGLINSLATHARVNEYGFIETPFWEVKNGKVNKEGNPVYLSADLEDECRVAPGDVATDKDGNIIADLIPVRYRQDFEKVPPHQVDYVQLSPVQVISVATSLIPFLEHDDANRALMGSNMQRQAVPLLRPERPLVGTGLESQVARDSGMVPITKVNGTVSYVDANEIVVKDDHGNEHFHYLQKYQRSNQDTCLNQRPIVKIGDKVISGQVLADGSACEGGEIALGQNVLIAYMPWEGYNYEDAILVSERMVTDDLYTSVHIEKYEIEARQTKLGPEEITREIPNISEESLNNLDEMGIIRIGAFVESGDILVGKVTPKGESDQPPEEKLLRAIFGEKARDVRDNSLRVPKTEKGRVLDVRIYTREQGDELPPGANMVVRVYVAQRRKIQVGDKMAGRHGNKGIISRILPREDMPYLPDGTPVDIVLNPLGVPSRMNVGQVFELLMGWAAANLNCRVKVVPFDEMYGAEKSHQTVQAFLEEASKQPGKAWVYNPEDPGKLLLKDGRTGEPFDQPVAVGYSHFLKLVHLVDDKIHARSTGPYSLVTQQPLGGKAQQGGQRLGEMEVWALEAYGAAYTLQELLTVKSDDMQGRNEALNAIVKGKPIPRPGTPESFKVLMRELQSLGLDIGVYTDEGKEVDLMQDINPRRNTPSRPTYESLGTSEYEED.

Residues 1072–1097 are disordered; sequence QDINPRRNTPSRPTYESLGTSEYEED. Residues 1077 to 1091 show a composition bias toward polar residues; the sequence is RRNTPSRPTYESLGT.

This sequence belongs to the RNA polymerase beta chain family. In terms of assembly, in cyanobacteria the RNAP catalytic core is composed of 2 alpha, 1 beta, 1 beta', 1 gamma and 1 omega subunit. When a sigma factor is associated with the core the holoenzyme is formed, which can initiate transcription.

The enzyme catalyses RNA(n) + a ribonucleoside 5'-triphosphate = RNA(n+1) + diphosphate. Functionally, DNA-dependent RNA polymerase catalyzes the transcription of DNA into RNA using the four ribonucleoside triphosphates as substrates. The sequence is that of DNA-directed RNA polymerase subunit beta from Prochlorococcus marinus (strain AS9601).